The primary structure comprises 387 residues: Probable NADH-dependent butanol dehydrogenase 1 (387 aa).

It belongs to the iron-containing alcohol dehydrogenase family.

Its pathway is alcohol metabolism; butanol biosynthesis. The protein is Probable NADH-dependent butanol dehydrogenase 1 (yugJ) of Bacillus subtilis (strain 168).